The chain runs to 195 residues: Orotate phosphoribosyltransferase (195 aa).

117–125 contributes to the 5-phospho-alpha-D-ribose 1-diphosphate binding site; sequence EDITTTGGS. Orotate contacts are provided by Thr-121 and Arg-149.

It belongs to the purine/pyrimidine phosphoribosyltransferase family. PyrE subfamily. Homodimer. Mg(2+) is required as a cofactor.

It carries out the reaction orotidine 5'-phosphate + diphosphate = orotate + 5-phospho-alpha-D-ribose 1-diphosphate. It functions in the pathway pyrimidine metabolism; UMP biosynthesis via de novo pathway; UMP from orotate: step 1/2. Functionally, catalyzes the transfer of a ribosyl phosphate group from 5-phosphoribose 1-diphosphate to orotate, leading to the formation of orotidine monophosphate (OMP). The chain is Orotate phosphoribosyltransferase from Acidithiobacillus ferrooxidans (strain ATCC 53993 / BNL-5-31) (Leptospirillum ferrooxidans (ATCC 53993)).